Here is a 156-residue protein sequence, read N- to C-terminus: NADH-ubiquinone oxidoreductase 20 kDa subunit (156 aa).

The [4Fe-4S] cluster site is built by Cys-33, Cys-34, Cys-98, and Cys-128.

This sequence belongs to the complex I 20 kDa subunit family. [4Fe-4S] cluster is required as a cofactor.

Its subcellular location is the mitochondrion. The enzyme catalyses a ubiquinone + NADH + 5 H(+)(in) = a ubiquinol + NAD(+) + 4 H(+)(out). The polypeptide is NADH-ubiquinone oxidoreductase 20 kDa subunit (NAD10) (Paramecium tetraurelia).